The chain runs to 212 residues: MPDFSIENEILKLKNNKECIIVGVDEVGYGSLAGPVVSAAVFFPNYNNETTQDINDSKKLTPKTRQKIYNKIITRVKWSIGFAHIFEIDEYNILNATHIAMKRALTGLNAHIDIDYVIIDGNKIPNIPWNAQAIIGGDTISTSIAAASIIAKVTRDRLMETLHIQYPQYNWNKNKGYGTKDHITSLYKYGKTIHHRNTFTPISKISYMFKNS.

Positions 19–212 (CIIVGVDEVG…SKISYMFKNS (194 aa)) constitute an RNase H type-2 domain. A divalent metal cation-binding residues include Asp-25, Glu-26, and Asp-120.

This sequence belongs to the RNase HII family. Mn(2+) is required as a cofactor. Requires Mg(2+) as cofactor.

The protein localises to the cytoplasm. It catalyses the reaction Endonucleolytic cleavage to 5'-phosphomonoester.. Endonuclease that specifically degrades the RNA of RNA-DNA hybrids. The polypeptide is Ribonuclease HII (Ehrlichia ruminantium (strain Welgevonden)).